The following is a 1604-amino-acid chain: Calmodulin-regulated spectrin-associated protein 1 (1604 aa).

Ser-216 carries the phosphoserine modification. The Calponin-homology (CH) domain occupies 235-350; that stretch reads PVDFARVVRY…FIAELFWWFE (116 aa). Residues Ser-390, Ser-394, and Ser-435 each carry the phosphoserine modification. A disordered region spans residues 394–413; that stretch reads SPAAMSPADLPPSTQPLTEG. The tract at residues 444–491 is disordered; that stretch reads RQKQQKVSQAEEIPDQRHRSNSLTRADGQPRGAAIAWPDKKNRPVSQP. The residue at position 531 (Thr-531) is a Phosphothreonine. Residues Ser-571, Ser-574, Ser-581, Ser-593, Ser-607, Ser-647, Ser-739, Ser-745, Ser-755, and Ser-757 each carry the phosphoserine modification. The disordered stretch occupies residues 642–671; that stretch reads MAKRPSEGSQPLVRKKVTGSHGSRDLNRTF. Basic and acidic residues predominate over residues 784 to 806; it reads EEESAKLQEDMKVKEHEDKDDAS. Disordered stretches follow at residues 784–824 and 842–888; these read EEES…SMSM and LNSC…KDPA. 2 stretches are compositionally biased toward low complexity: residues 813 to 824 and 847 to 858; these read LSTTSQLSSMSM and TKSSTSSSQKTT. A compositionally biased stretch (basic and acidic residues) spans 874–886; it reads QKREQSPSRHSKD. The tract at residues 888 to 909 is sufficient for interaction with SPTBN1; that stretch reads ASLLASELVQLHMQLEEKRRAI. 2 coiled-coil regions span residues 890 to 926 and 1026 to 1058; these read LLAS…QRLK and DVNE…QEQL. Residues 920-939 form a sufficient for interaction with calmodulin region; it reads SARQRLKLGKAAFLHVVKKG. Disordered stretches follow at residues 1085–1163, 1246–1271, and 1298–1448; these read FVEP…GELP, PDED…KPGV, and RKAE…DRDW. Position 1090 is a phosphoserine (Ser-1090). The span at 1113–1124 shows a compositional bias: basic and acidic residues; the sequence is RPAELKVPKDRQ. A compositionally biased stretch (polar residues) spans 1125–1137; that stretch reads QGCSRSKTPTPSV. Ser-1154 bears the Phosphoserine mark. 2 stretches are compositionally biased toward basic and acidic residues: residues 1246-1258 and 1298-1348; these read PDED…HESS and RKAE…EYLR. Residues 1286–1357 adopt a coiled-coil conformation; the sequence is AKKRAAFLLK…RRKQQQALEE (72 aa). Over residues 1363 to 1374 the composition is skewed to basic residues; it reads PKSKPKKPRPKS. Positions 1382–1394 are enriched in polar residues; sequence SDSGTKCSSTPDN. The segment covering 1395–1412 has biased composition (low complexity); sequence LSQTHSGSSLSLASAATT. 2 positions are modified to phosphoserine: Ser-1400 and Ser-1429. In terms of domain architecture, CKK spans 1465 to 1599; that stretch reads GPKLFKEPSS…QPKRPTVPKK (135 aa). Tyr-1539 is subject to Phosphotyrosine.

This sequence belongs to the CAMSAP1 family. Interacts with spectrin via SPTBN1; the interaction is direct. Interacts with calmodulin; calcium-dependent it prevents interaction with spectrin. In brain, specifically expressed in astrocytes (at protein level).

Its subcellular location is the cytoplasm. The protein resides in the cytoskeleton. Functionally, key microtubule-organizing protein that specifically binds the minus-end of non-centrosomal microtubules and regulates their dynamics and organization. Specifically recognizes growing microtubule minus-ends and stabilizes microtubules. Acts on free microtubule minus-ends that are not capped by microtubule-nucleating proteins or other factors and protects microtubule minus-ends from depolymerization. In contrast to CAMSAP2 and CAMSAP3, tracks along the growing tips of minus-end microtubules without significantly affecting the polymerization rate: binds at the very tip of the microtubules minus-end and acts as a minus-end tracking protein (-TIP) that dissociates from microtubules after allowing tubulin incorporation. Through interaction with spectrin may regulate neurite outgrowth. In Rattus norvegicus (Rat), this protein is Calmodulin-regulated spectrin-associated protein 1 (Camsap1).